The primary structure comprises 191 residues: Ciliary microtubule-associated protein 3 (191 aa).

In terms of assembly, interacts with proteins involved in ciliary transport, including ARL13B, CETN1, KIF3A, RAB6A, RAB8A, TUBB1 and TUBG1. Interacts with AURKA.

The protein resides in the cytoplasmic vesicle. It is found in the golgi apparatus. It localises to the trans-Golgi network. Its subcellular location is the cytoplasm. Functionally, during primary cilia disassembly, involved in cilia disassembly. Required specifically to control cilia retraction as well as the liberation and duplication of the basal body/centrosome. May act by stimulating AURKA activity at the basal body in a cell cycle-dependent manner. In Homo sapiens (Human), this protein is Ciliary microtubule-associated protein 3.